The primary structure comprises 282 residues: Biotin synthase (282 aa).

A Radical SAM core domain is found at 1 to 228; that stretch reads MQEIFLCSIS…NARLMVAGGR (228 aa). Residues Cys17, Cys21, and Cys24 each contribute to the [4Fe-4S] cluster site. [2Fe-2S] cluster contacts are provided by Cys61, Cys96, Cys154, and Arg221.

This sequence belongs to the radical SAM superfamily. Biotin synthase family. As to quaternary structure, homodimer. [4Fe-4S] cluster serves as cofactor. Requires [2Fe-2S] cluster as cofactor.

The catalysed reaction is (4R,5S)-dethiobiotin + (sulfur carrier)-SH + 2 reduced [2Fe-2S]-[ferredoxin] + 2 S-adenosyl-L-methionine = (sulfur carrier)-H + biotin + 2 5'-deoxyadenosine + 2 L-methionine + 2 oxidized [2Fe-2S]-[ferredoxin]. It participates in cofactor biosynthesis; biotin biosynthesis; biotin from 7,8-diaminononanoate: step 2/2. Catalyzes the conversion of dethiobiotin (DTB) to biotin by the insertion of a sulfur atom into dethiobiotin via a radical-based mechanism. The polypeptide is Biotin synthase (Helicobacter pylori (strain G27)).